The sequence spans 384 residues: Guanine nucleotide-binding protein alpha-1 subunit (384 aa).

The tract at residues 1–22 (MGSLCSRNKHYSQADDEENTQT) is disordered. Gly-2 is lipidated: N-myristoyl glycine. Cys-5 carries the S-palmitoyl cysteine lipid modification. One can recognise a G-alpha domain in the interval 38 to 384 (HIQKLLLLGA…RRNLFEAGLL (347 aa)). A G1 motif region spans residues 41 to 54 (KLLLLGAGDSGKST). Asp-49, Ser-50, Gly-51, Lys-52, Ser-53, Thr-54, Asp-163, Leu-188, Thr-194, Gly-222, Asn-288, Lys-289, Asp-291, and Ala-356 together coordinate GTP. Ser-53 serves as a coordination point for Mg(2+). Residues 186 to 194 (DVLFARIRT) are G2 motif. Thr-194 lines the Mg(2+) pocket. The G3 motif stretch occupies residues 215 to 224 (YRLFDVGGQR). Residues 284–291 (MLFLNKFD) form a G4 motif region. The interval 354–359 (TTALDQ) is G5 motif.

This sequence belongs to the G-alpha family. G proteins are composed of 3 units; alpha, beta and gamma. The alpha chain contains the guanine nucleotide binding site. It depends on Mg(2+) as a cofactor.

Functionally, guanine nucleotide-binding proteins (G proteins) are involved as modulators or transducers in various transmembrane signaling systems. The sequence is that of Guanine nucleotide-binding protein alpha-1 subunit (GPA1) from Solanum tuberosum (Potato).